The following is a 91-amino-acid chain: Small ribosomal subunit protein bS20 (91 aa).

Residues 1–23 (MANTPSAKKRAKQAEKRRSHNAS) are disordered. Positions 7 to 20 (AKKRAKQAEKRRSH) are enriched in basic residues.

This sequence belongs to the bacterial ribosomal protein bS20 family.

In terms of biological role, binds directly to 16S ribosomal RNA. The protein is Small ribosomal subunit protein bS20 of Pseudomonas paraeruginosa (strain DSM 24068 / PA7) (Pseudomonas aeruginosa (strain PA7)).